Consider the following 647-residue polypeptide: Pre-mRNA-splicing factor SLU7 (647 aa).

The span at 1-19 shows a compositional bias: polar residues; sequence MASYKQNLPPSALIKQQVN. Positions 1–44 are disordered; that stretch reads MASYKQNLPPSALIKQQVNVADKKSKAEVQRDRQLEEDRKAGTA. The segment covering 21–41 has biased composition (basic and acidic residues); that stretch reads ADKKSKAEVQRDRQLEEDRKA. The CCHC-type zinc finger occupies 113-130; sequence GACENCGAMGHQKRDCFD. Disordered stretches follow at residues 193-212 and 465-620; these read HEMK…APKD and EVKE…KEME. The segment covering 465 to 479 has biased composition (basic and acidic residues); sequence EVKEEKEKEDSIKDE. Positions 480 to 491 are enriched in acidic residues; that stretch reads VAEENSDNDNDE. The segment covering 513-533 has biased composition (basic and acidic residues); it reads EKEREKERLIEKERRERDQRR. Basic residues predominate over residues 534–555; that stretch reads RDKKREKRERKKAKLGKRKRRH. The span at 588–606 shows a compositional bias: basic and acidic residues; that stretch reads EKAEGMKAAREGDRGRKYN.

It belongs to the SLU7 family.

It localises to the nucleus. Participates in the second catalytic step of pre-mRNA splicing, when the free hydroxyl group of exon I attacks the 3'-splice site to generate spliced mRNA and the excised lariat intron. This Caenorhabditis elegans protein is Pre-mRNA-splicing factor SLU7.